A 312-amino-acid polypeptide reads, in one-letter code: Ribosomal RNA small subunit methyltransferase H (312 aa).

S-adenosyl-L-methionine is bound by residues 30 to 32 (GGH), Asp50, Phe80, Asp98, and Gln105.

It belongs to the methyltransferase superfamily. RsmH family.

Its subcellular location is the cytoplasm. It catalyses the reaction cytidine(1402) in 16S rRNA + S-adenosyl-L-methionine = N(4)-methylcytidine(1402) in 16S rRNA + S-adenosyl-L-homocysteine + H(+). In terms of biological role, specifically methylates the N4 position of cytidine in position 1402 (C1402) of 16S rRNA. The protein is Ribosomal RNA small subunit methyltransferase H of Lawsonia intracellularis (strain PHE/MN1-00).